The sequence spans 463 residues: MTNVITRFAPSPTGFLHIGSARTALFNYLFARHHNGKFLLRIEDTDKERSTKEAVEAIFSGLKWLGLDWDGEVIFQSKRNNLYKEAALRLLQEGKAYYCFTSQEEIERQRQKALENKQHFIFNSEWRDKDSSTYPTDIKPVIRLKVPREGSITIHDTLQGDVVIENSHIDDMVLLRADGTATYMLAVVVDDHDMGITHIIRGDDHLTNAARQIAIYHAFGYEVPSMTHIPLIHGADGAKLSKRHGALGVEAYKDMGYLPESLCNYLLRLGWSHGDDEIISMTQAIEWFNLDSLGKSPSKLDFAKMNSLNAHYLRMLDNDSLTSKTVEILKQNYKISEKEVSYIKQAMPSLLVRSETLLDLAKLARIYLINSPIIYEQEAKEIIENCDKDLIKQVIEGLNKIEQFDKESVQNKFKEIATHNGLKLNDIMKPVRALITGMTASPSVFEIAEILGKENILKRLKII.

The short motif at 10-20 is the 'HIGH' region element; that stretch reads PSPTGFLHIGS. The short motif at 239–243 is the 'KMSKS' region element; that stretch reads KLSKR. Lys242 contributes to the ATP binding site.

The protein belongs to the class-I aminoacyl-tRNA synthetase family. Glutamate--tRNA ligase type 1 subfamily. In terms of assembly, monomer.

It localises to the cytoplasm. The enzyme catalyses tRNA(Glu) + L-glutamate + ATP = L-glutamyl-tRNA(Glu) + AMP + diphosphate. In terms of biological role, catalyzes the attachment of glutamate to tRNA(Glu) in a two-step reaction: glutamate is first activated by ATP to form Glu-AMP and then transferred to the acceptor end of tRNA(Glu). The protein is Glutamate--tRNA ligase 2 of Rickettsia felis (strain ATCC VR-1525 / URRWXCal2) (Rickettsia azadi).